Reading from the N-terminus, the 263-residue chain is 3'-5' ssDNA/RNA exonuclease TatD (263 aa).

A divalent metal cation-binding residues include Glu-91, His-127, and His-152.

It belongs to the metallo-dependent hydrolases superfamily. TatD-type hydrolase family. TatD subfamily. As to quaternary structure, monomer. It depends on Mg(2+) as a cofactor.

Its subcellular location is the cytoplasm. Its function is as follows. 3'-5' exonuclease that prefers single-stranded DNA and RNA. May play a role in the H(2)O(2)-induced DNA damage repair. This is 3'-5' ssDNA/RNA exonuclease TatD from Klebsiella pneumoniae (strain 342).